A 323-amino-acid polypeptide reads, in one-letter code: Tumor-associated calcium signal transducer 2 (323 aa).

An N-terminal signal peptide occupies residues 1-26; it reads MARGPGLAPPPLRLPLLLLVLAAVTG. Topologically, residues 27–274 are extracellular; that stretch reads HTAAQDNCTC…PPKFSMKRLT (248 aa). Asparagine 33 carries an N-linked (GlcNAc...) asparagine glycan. The Thyroglobulin type-1 domain occupies 70 to 145; it reads TSKCLLLKAR…TDKGDLSLRC (76 aa). 3 disulfides stabilise this stretch: cysteine 73-cysteine 108, cysteine 119-cysteine 125, and cysteine 127-cysteine 145. N-linked (GlcNAc...) asparagine glycosylation is present at asparagine 120. N-linked (GlcNAc...) asparagine glycosylation is found at asparagine 168 and asparagine 208. The helical transmembrane segment at 275–297 threads the bilayer; the sequence is AGLIAVIVVVVVALVAGMAVLVI. Residues 298-323 are Cytoplasmic-facing; it reads TNRRKSGKYKKVEIKELGELRKEPSL.

This sequence belongs to the EPCAM family. Post-translationally, the N-terminus is blocked. As to expression, placenta, pancreatic carcinoma cell lines.

It is found in the membrane. In terms of biological role, may function as a growth factor receptor. The polypeptide is Tumor-associated calcium signal transducer 2 (TACSTD2) (Homo sapiens (Human)).